The following is a 421-amino-acid chain: Imidazolonepropionase (421 aa).

The Fe(3+) site is built by H81 and H83. Residues H81 and H83 each contribute to the Zn(2+) site. 3 residues coordinate 4-imidazolone-5-propanoate: R90, Y153, and H186. Y153 contacts N-formimidoyl-L-glutamate. H251 lines the Fe(3+) pocket. H251 contributes to the Zn(2+) binding site. E254 contacts 4-imidazolone-5-propanoate. Residue D326 coordinates Fe(3+). Residue D326 participates in Zn(2+) binding. Residues N328 and G330 each coordinate N-formimidoyl-L-glutamate. S331 lines the 4-imidazolone-5-propanoate pocket.

It belongs to the metallo-dependent hydrolases superfamily. HutI family. Zn(2+) is required as a cofactor. Fe(3+) serves as cofactor.

The protein resides in the cytoplasm. The enzyme catalyses 4-imidazolone-5-propanoate + H2O = N-formimidoyl-L-glutamate. The protein operates within amino-acid degradation; L-histidine degradation into L-glutamate; N-formimidoyl-L-glutamate from L-histidine: step 3/3. Its function is as follows. Catalyzes the hydrolytic cleavage of the carbon-nitrogen bond in imidazolone-5-propanoate to yield N-formimidoyl-L-glutamate. It is the third step in the universal histidine degradation pathway. This is Imidazolonepropionase from Streptococcus pyogenes serotype M3 (strain SSI-1).